Here is a 450-residue protein sequence, read N- to C-terminus: Carbamoyl phosphate synthase arginine-specific small chain (450 aa).

A mitochondrion-targeting transit peptide spans 1–29 (MFAARLFKAMPARASAFPSVNASIQSRFM). The 188-residue stretch at 220 to 407 (HVAVIDCGVK…LDSVRKYKAS (188 aa)) folds into the Glutamine amidotransferase type-1 domain. Catalysis depends on C296, which acts as the Nucleophile. Active-site residues include H380 and E382.

It belongs to the CarA family. In terms of assembly, heterodimer composed of 2 chains; the small (or glutamine) chain promotes the hydrolysis of glutamine to ammonia, which is used by the large (or ammonia) chain to synthesize carbamoyl phosphate.

Its subcellular location is the mitochondrion matrix. The enzyme catalyses hydrogencarbonate + L-glutamine + 2 ATP + H2O = carbamoyl phosphate + L-glutamate + 2 ADP + phosphate + 2 H(+). The catalysed reaction is L-glutamine + H2O = L-glutamate + NH4(+). It functions in the pathway amino-acid biosynthesis; L-arginine biosynthesis; carbamoyl phosphate from bicarbonate: step 1/1. In terms of biological role, small subunit of the arginine-specific carbamoyl phosphate synthase (CPSase). CPSase catalyzes the formation of carbamoyl phosphate from the ammonia moiety of glutamine, carbonate, and phosphate donated by ATP, the first step of the arginine biosynthetic pathway. The small subunit (glutamine amidotransferase) binds and cleaves glutamine to supply the large subunit with the substrate ammonia. The sequence is that of Carbamoyl phosphate synthase arginine-specific small chain (cpa1) from Aspergillus oryzae (strain ATCC 42149 / RIB 40) (Yellow koji mold).